A 147-amino-acid polypeptide reads, in one-letter code: Hemoglobin subunit beta (147 aa).

Positions 3-147 constitute a Globin domain; the sequence is HWTAEEKQLI…VAHALARKYH (145 aa). Heme b contacts are provided by histidine 64 and histidine 93.

It belongs to the globin family. As to quaternary structure, heterotetramer of two alpha chains and two beta chains. Red blood cells.

Involved in oxygen transport from the lung to the various peripheral tissues. The protein is Hemoglobin subunit beta (HBB) of Cairina moschata (Muscovy duck).